A 313-amino-acid chain; its full sequence is Porphobilinogen deaminase (313 aa).

C241 is subject to S-(dipyrrolylmethanemethyl)cysteine.

This sequence belongs to the HMBS family. Monomer. It depends on dipyrromethane as a cofactor.

The enzyme catalyses 4 porphobilinogen + H2O = hydroxymethylbilane + 4 NH4(+). It participates in porphyrin-containing compound metabolism; protoporphyrin-IX biosynthesis; coproporphyrinogen-III from 5-aminolevulinate: step 2/4. Its pathway is porphyrin-containing compound metabolism; chlorophyll biosynthesis. Tetrapolymerization of the monopyrrole PBG into the hydroxymethylbilane pre-uroporphyrinogen in several discrete steps. The polypeptide is Porphobilinogen deaminase (Chlorobium luteolum (strain DSM 273 / BCRC 81028 / 2530) (Pelodictyon luteolum)).